A 186-amino-acid polypeptide reads, in one-letter code: Threonylcarbamoyl-AMP synthase (186 aa).

Residues 6-186 (GFRLRLAANA…FDAMSGRRIR (181 aa)) form the YrdC-like domain.

The protein belongs to the SUA5 family. TsaC subfamily.

It is found in the cytoplasm. It carries out the reaction L-threonine + hydrogencarbonate + ATP = L-threonylcarbamoyladenylate + diphosphate + H2O. Required for the formation of a threonylcarbamoyl group on adenosine at position 37 (t(6)A37) in tRNAs that read codons beginning with adenine. Catalyzes the conversion of L-threonine, HCO(3)(-)/CO(2) and ATP to give threonylcarbamoyl-AMP (TC-AMP) as the acyladenylate intermediate, with the release of diphosphate. The sequence is that of Threonylcarbamoyl-AMP synthase from Methylococcus capsulatus (strain ATCC 33009 / NCIMB 11132 / Bath).